The primary structure comprises 283 residues: Thymidylate synthase (283 aa).

R22 is a dUMP binding site. The Nucleophile role is filled by C160. DUMP is bound by residues 180–183 (RSCD), N191, and 221–223 (HIY). D183 contacts (6R)-5,10-methylene-5,6,7,8-tetrahydrofolate. A (6R)-5,10-methylene-5,6,7,8-tetrahydrofolate-binding site is contributed by S282.

Belongs to the thymidylate synthase family. Bacterial-type ThyA subfamily. Homodimer.

The protein resides in the cytoplasm. It carries out the reaction dUMP + (6R)-5,10-methylene-5,6,7,8-tetrahydrofolate = 7,8-dihydrofolate + dTMP. Its pathway is pyrimidine metabolism; dTTP biosynthesis. Functionally, catalyzes the reductive methylation of 2'-deoxyuridine-5'-monophosphate (dUMP) to 2'-deoxythymidine-5'-monophosphate (dTMP) while utilizing 5,10-methylenetetrahydrofolate (mTHF) as the methyl donor and reductant in the reaction, yielding dihydrofolate (DHF) as a by-product. This enzymatic reaction provides an intracellular de novo source of dTMP, an essential precursor for DNA biosynthesis. In Marinomonas sp. (strain MWYL1), this protein is Thymidylate synthase.